Here is a 294-residue protein sequence, read N- to C-terminus: Elongation factor Ts (294 aa).

Positions threonine 81 to valine 84 are involved in Mg(2+) ion dislocation from EF-Tu.

It belongs to the EF-Ts family.

The protein localises to the cytoplasm. Functionally, associates with the EF-Tu.GDP complex and induces the exchange of GDP to GTP. It remains bound to the aminoacyl-tRNA.EF-Tu.GTP complex up to the GTP hydrolysis stage on the ribosome. The chain is Elongation factor Ts (tsf) from Mycoplasmopsis pulmonis (strain UAB CTIP) (Mycoplasma pulmonis).